The primary structure comprises 93 residues: Small ribosomal subunit protein uS19 (93 aa).

The protein belongs to the universal ribosomal protein uS19 family.

Protein S19 forms a complex with S13 that binds strongly to the 16S ribosomal RNA. This chain is Small ribosomal subunit protein uS19, found in Pseudarthrobacter chlorophenolicus (strain ATCC 700700 / DSM 12829 / CIP 107037 / JCM 12360 / KCTC 9906 / NCIMB 13794 / A6) (Arthrobacter chlorophenolicus).